A 492-amino-acid chain; its full sequence is Dipeptide and tripeptide permease A (492 aa).

The Cytoplasmic segment spans residues 1-20; that stretch reads MSTANKHPEAASLNAFKQPR. A helical membrane pass occupies residues 21 to 43; sequence SFYLIFSIELWERFGYYGLQGIM. The Periplasmic portion of the chain corresponds to 44–58; that stretch reads AVYLVKMLGMSEAQS. A helical transmembrane segment spans residues 59-79; that stretch reads ITLFASFSALVYGLIAVGGWL. Topologically, residues 80 to 88 are cytoplasmic; the sequence is GDKVLGTKR. The chain crosses the membrane as a helical span at residues 89 to 109; that stretch reads VIVLGTLVLALGYALVAWSGH. Residue Asp110 is a topological domain, periplasmic. Residues 111-131 form a helical membrane-spanning segment; that stretch reads IAMIYFGMATIAVGNGLFKAN. Topologically, residues 132 to 152 are cytoplasmic; it reads PSSLLSTCYEKDDPRLDGAFT. Residues 153–173 traverse the membrane as a helical segment; it reads MYYMAINIGSFFSMLATPWLA. The Periplasmic portion of the chain corresponds to 174–178; sequence AQFGW. Residues 179 to 199 form a helical membrane-spanning segment; that stretch reads STAFGLSFVGMLITLVNFMFF. Topologically, residues 200 to 217 are cytoplasmic; that stretch reads RKWVKDHGSKPDFAPLNM. Residues 218–238 form a helical membrane-spanning segment; sequence GKLLVTLLGIAVMIAAATWLL. Over 239–245 the chain is Periplasmic; it reads HNQDIAR. A helical membrane pass occupies residues 246–266; that stretch reads MVLGAVAVAIVVIFTKEALTL. At 267 to 273 the chain is on the cytoplasmic side; sequence KGAARRK. A helical membrane pass occupies residues 274 to 294; it reads MIVAFLLMLEAIVFFVLYMQM. Residues 295–319 lie on the Periplasmic side of the membrane; the sequence is PTSLNFFAIRNVEHSLLGIAFQPEQ. Residues 320-340 traverse the membrane as a helical segment; sequence FQALNPFWIMIFSPLLAALYN. Over 341-351 the chain is Cytoplasmic; it reads KLGDRMPMPHK. A helical membrane pass occupies residues 352 to 372; the sequence is FALGMVLCSAAFLVLPLGASL. The Periplasmic segment spans residues 373–377; that stretch reads ANKMG. A helical membrane pass occupies residues 378–398; that stretch reads IVSVGWLVLSYALQSVGELMI. The Cytoplasmic portion of the chain corresponds to 399–413; that stretch reads SGLGLAMVAQLVPQR. Residues 414–434 form a helical membrane-spanning segment; the sequence is LMGFIMGSWFLTTAGAAMVAG. The Periplasmic segment spans residues 435–458; it reads KVANLMAVPENITNPLLSLHVYGD. A helical transmembrane segment spans residues 459–479; sequence IFFKIGITTGVIAVLMILAAP. The Cytoplasmic portion of the chain corresponds to 480 to 492; that stretch reads LLNRMTQDEQPGV.

This sequence belongs to the major facilitator superfamily. Proton-dependent oligopeptide transporter (POT/PTR) (TC 2.A.17) family. DtpA subfamily.

The protein resides in the cell inner membrane. Proton-dependent permease that transports di- and tripeptides. In Erwinia pyrifoliae (strain DSM 12163 / CIP 106111 / Ep16/96), this protein is Dipeptide and tripeptide permease A.